Consider the following 74-residue polypeptide: Lambda-hexatoxin-Hv1e (74 aa).

A signal peptide spans 1–22 (MNTATCFIVLLVVATVIGGIEA). Positions 23-35 (GEFDMRKDVMGLF) are excised as a propeptide. Disulfide bonds link cysteine 40–cysteine 54, cysteine 47–cysteine 59, cysteine 50–cysteine 51, and cysteine 53–cysteine 69.

This sequence belongs to the neurotoxin 11 (kappa toxin) family. Expressed by the venom gland.

It is found in the secreted. Its function is as follows. This excitatory toxin inhibits insect calcium-activated potassium (KCa) channels (Slo-type). The chain is Lambda-hexatoxin-Hv1e from Hadronyche versuta (Blue mountains funnel-web spider).